Consider the following 462-residue polypeptide: L-seryl-tRNA(Sec) selenium transferase (462 aa).

The residue at position 292 (Lys-292) is an N6-(pyridoxal phosphate)lysine.

The protein belongs to the SelA family. Pyridoxal 5'-phosphate is required as a cofactor.

The protein localises to the cytoplasm. The enzyme catalyses L-seryl-tRNA(Sec) + selenophosphate + H(+) = L-selenocysteinyl-tRNA(Sec) + phosphate. It functions in the pathway aminoacyl-tRNA biosynthesis; selenocysteinyl-tRNA(Sec) biosynthesis; selenocysteinyl-tRNA(Sec) from L-seryl-tRNA(Sec) (bacterial route): step 1/1. Functionally, converts seryl-tRNA(Sec) to selenocysteinyl-tRNA(Sec) required for selenoprotein biosynthesis. The sequence is that of L-seryl-tRNA(Sec) selenium transferase from Geobacter sulfurreducens (strain ATCC 51573 / DSM 12127 / PCA).